Consider the following 242-residue polypeptide: Octanoyltransferase (242 aa).

Positions Ser31–Gln206 constitute a BPL/LPL catalytic domain. Residues Arg70–His77, Ser137–Gly139, and Gly150–Ala152 each bind substrate. Cys168 serves as the catalytic Acyl-thioester intermediate.

It belongs to the LipB family.

It is found in the cytoplasm. The enzyme catalyses octanoyl-[ACP] + L-lysyl-[protein] = N(6)-octanoyl-L-lysyl-[protein] + holo-[ACP] + H(+). The protein operates within protein modification; protein lipoylation via endogenous pathway; protein N(6)-(lipoyl)lysine from octanoyl-[acyl-carrier-protein]: step 1/2. Catalyzes the transfer of endogenously produced octanoic acid from octanoyl-acyl-carrier-protein onto the lipoyl domains of lipoate-dependent enzymes. Lipoyl-ACP can also act as a substrate although octanoyl-ACP is likely to be the physiological substrate. In Coxiella burnetii (strain Dugway 5J108-111), this protein is Octanoyltransferase.